A 648-amino-acid chain; its full sequence is DNA ligase (648 aa).

NAD(+) contacts are provided by residues 63-67 (DILYD) and 105-106 (ST). Lys143 acts as the N6-AMP-lysine intermediate in catalysis. NAD(+) is bound by residues Arg159, Glu190, and Lys302. Zn(2+)-binding residues include Cys390, Cys393, Cys406, and Cys412. The region spanning 570 to 648 (SLASPLTGKI…SEQEYLDLIS (79 aa)) is the BRCT domain.

The protein belongs to the NAD-dependent DNA ligase family. LigA subfamily. Mg(2+) serves as cofactor. Requires Mn(2+) as cofactor.

The catalysed reaction is NAD(+) + (deoxyribonucleotide)n-3'-hydroxyl + 5'-phospho-(deoxyribonucleotide)m = (deoxyribonucleotide)n+m + AMP + beta-nicotinamide D-nucleotide.. Its function is as follows. DNA ligase that catalyzes the formation of phosphodiester linkages between 5'-phosphoryl and 3'-hydroxyl groups in double-stranded DNA using NAD as a coenzyme and as the energy source for the reaction. It is essential for DNA replication and repair of damaged DNA. In Shewanella baltica (strain OS155 / ATCC BAA-1091), this protein is DNA ligase.